Reading from the N-terminus, the 562-residue chain is Calmodulin-binding protein 60 F (562 aa).

The segment at Met1–Glu22 is disordered. The interval Met5–Lys84 is calmodulin-binding. Positions His12–Glu22 are enriched in basic and acidic residues. The tract at residues Glu154–Asn273 is DNA-binding.

Belongs to the plant ACBP60 protein family. As to quaternary structure, interacts with calmodulin (CaM).

The protein localises to the nucleus. In terms of biological role, transcription activator that binds DNA in a sequence-specific manner, likely 5'-GAAATTTTGG-3', to promote the expression of target genes. This is Calmodulin-binding protein 60 F from Arabidopsis thaliana (Mouse-ear cress).